The primary structure comprises 421 residues: Acyl-coenzyme A thioesterase 1 (421 aa).

Residues S232, D326, and H360 each act as charge relay system in the active site.

This sequence belongs to the C/M/P thioester hydrolase family. Monomer.

The protein localises to the cytoplasm. The protein resides in the cytosol. It catalyses the reaction hexadecanoyl-CoA + H2O = hexadecanoate + CoA + H(+). The catalysed reaction is decanoyl-CoA + H2O = decanoate + CoA + H(+). The enzyme catalyses dodecanoyl-CoA + H2O = dodecanoate + CoA + H(+). It carries out the reaction tetradecanoyl-CoA + H2O = tetradecanoate + CoA + H(+). It catalyses the reaction octadecanoyl-CoA + H2O = octadecanoate + CoA + H(+). The catalysed reaction is eicosanoyl-CoA + H2O = eicosanoate + CoA + H(+). The enzyme catalyses (9Z)-octadecenoyl-CoA + H2O = (9Z)-octadecenoate + CoA + H(+). It carries out the reaction (9Z)-hexadecenoyl-CoA + H2O = (9Z)-hexadecenoate + CoA + H(+). It catalyses the reaction (9E)-octadecenoyl-CoA + H2O = (9E)-octadecenoate + CoA + H(+). It functions in the pathway lipid metabolism; fatty acid metabolism. Functionally, catalyzes the hydrolysis of acyl-CoAs into free fatty acids and coenzyme A (CoASH), regulating their respective intracellular levels. More active towards saturated and unsaturated long chain fatty acyl-CoAs (C12-C20). This Homo sapiens (Human) protein is Acyl-coenzyme A thioesterase 1 (ACOT1).